Reading from the N-terminus, the 340-residue chain is Cobalt-precorrin-5B C(1)-methyltransferase (340 aa).

Belongs to the CbiD family.

The catalysed reaction is Co-precorrin-5B + S-adenosyl-L-methionine = Co-precorrin-6A + S-adenosyl-L-homocysteine. It participates in cofactor biosynthesis; adenosylcobalamin biosynthesis; cob(II)yrinate a,c-diamide from sirohydrochlorin (anaerobic route): step 6/10. In terms of biological role, catalyzes the methylation of C-1 in cobalt-precorrin-5B to form cobalt-precorrin-6A. The chain is Cobalt-precorrin-5B C(1)-methyltransferase from Pyrobaculum aerophilum (strain ATCC 51768 / DSM 7523 / JCM 9630 / CIP 104966 / NBRC 100827 / IM2).